A 137-amino-acid polypeptide reads, in one-letter code: MDAKNTTHRIGQTGPVEKQTGIRHLFAAASYSLGGAKRLIGEAAFRHELIAFAAAMIAFIIVGATFFQYVAMAILFLLMMAFEAINTAIEEIVDRVSPEISEMGKNAKDLGSFACLCLIVANGVYAAYVVIFDGFMN.

Glutamate 42 contributes to the a divalent metal cation binding site. 2 helical membrane-spanning segments follow: residues 49-67 (LIAF…ATFF) and 73-89 (AILF…NTAI). Glutamate 83 acts as the Proton acceptor in catalysis. Position 90 (glutamate 90) interacts with a divalent metal cation. The helical transmembrane segment at 112-132 (SFACLCLIVANGVYAAYVVIF) threads the bilayer.

It belongs to the bacterial diacylglycerol kinase family. The cofactor is Mg(2+).

It localises to the cell inner membrane. The enzyme catalyses a 1,2-diacyl-sn-glycerol + ATP = a 1,2-diacyl-sn-glycero-3-phosphate + ADP + H(+). Catalyzes the ATP-dependent phosphorylation of sn-l,2-diacylglycerol (DAG) to phosphatidic acid. Involved in the recycling of diacylglycerol produced as a by-product during membrane-derived oligosaccharide (MDO) biosynthesis. The chain is Diacylglycerol kinase (dgkA) from Sinorhizobium sp.